A 131-amino-acid chain; its full sequence is Translation initiation factor 5A (131 aa).

K36 bears the Hypusine mark.

This sequence belongs to the eIF-5A family.

It localises to the cytoplasm. In terms of biological role, functions by promoting the formation of the first peptide bond. The chain is Translation initiation factor 5A (eIF5A) from Metallosphaera sedula (strain ATCC 51363 / DSM 5348 / JCM 9185 / NBRC 15509 / TH2).